Reading from the N-terminus, the 155-residue chain is MAEKMNVESFNLDHTKVKAPFVRLAGTKVGLHGDEIYKYDVRFKQPNKEHMEMPALHSLEHLMAELARNHTDKVVDISPMGCQTGFYMSFINFSDYDDALDVLAKTLADVLEAKEVPACNEVQCGWAASHSLEGAKELAEEFLAKRSEWKNVFGE.

The Fe cation site is built by H57, H61, and C124.

Belongs to the LuxS family. As to quaternary structure, homodimer. It depends on Fe cation as a cofactor.

The enzyme catalyses S-(5-deoxy-D-ribos-5-yl)-L-homocysteine = (S)-4,5-dihydroxypentane-2,3-dione + L-homocysteine. Its function is as follows. Involved in the synthesis of autoinducer 2 (AI-2) which is secreted by bacteria and is used to communicate both the cell density and the metabolic potential of the environment. The regulation of gene expression in response to changes in cell density is called quorum sensing. Catalyzes the transformation of S-ribosylhomocysteine (RHC) to homocysteine (HC) and 4,5-dihydroxy-2,3-pentadione (DPD). This is S-ribosylhomocysteine lyase from Listeria monocytogenes serotype 4a (strain HCC23).